The sequence spans 81 residues: Mipartoxin-2 (81 aa).

Residues 1–21 (MKTLLLTLVVVTIVCLDLGNS) form the signal peptide. Cystine bridges form between Cys-24-Cys-42, Cys-35-Cys-61, Cys-65-Cys-73, and Cys-74-Cys-79.

Belongs to the three-finger toxin family. Short-chain subfamily. Expressed by the venom gland.

It is found in the secreted. In terms of biological role, snake venom neurotoxin that blocks neuromuscular transmission, presenting a postsynaptic action through the nicotinic acetylcholine receptor (nAChR). Has no cytotoxic activity. The protein is Mipartoxin-2 of Micrurus mipartitus (Red-tailed coral snake).